The chain runs to 438 residues: Aminopeptidase E (438 aa).

Catalysis depends on residues cysteine 70, histidine 362, and asparagine 383.

Belongs to the peptidase C1 family.

The protein resides in the cytoplasm. Functionally, can hydrolyze internal peptide bonds in Met-enkephalin and bradykinin; however, hydrolysis of alpha-, beta-, and kappa-caseins is not detected. In Lactobacillus helveticus (Lactobacillus suntoryeus), this protein is Aminopeptidase E (pepE).